We begin with the raw amino-acid sequence, 829 residues long: uncharacterized protein (829 aa).

Belongs to the IIV-6 050L family.

This is an uncharacterized protein from Invertebrate iridescent virus 3 (IIV-3).